The following is a 101-amino-acid chain: PAT complex subunit Asterix (101 aa).

A disordered region spans residues Met-1–Asp-26. Residues Met-1–Pro-27 lie on the Cytoplasmic side of the membrane. Residues Thr-28–Leu-46 form a helical membrane-spanning segment. A topological domain (lumenal) is located at residue Lys-47. Residues Leu-48 to Asn-65 traverse the membrane as a helical segment. Residues Ser-66–Ser-69 are Cytoplasmic-facing. The chain crosses the membrane as a helical span at residues Glu-70–Tyr-90. Topologically, residues Leu-91–Trp-101 are lumenal.

It belongs to the Asterix family. In terms of assembly, component of the multi-pass translocon (MPT) complex.

It is found in the endoplasmic reticulum membrane. Component of the multi-pass translocon (MPT) complex that mediates insertion of multi-pass membrane proteins into the lipid bilayer of membranes. The MPT complex takes over after the SEC61 complex: following membrane insertion of the first few transmembrane segments of proteins by the SEC61 complex, the MPT complex occludes the lateral gate of the SEC61 complex to promote insertion of subsequent transmembrane regions. In Gallus gallus (Chicken), this protein is PAT complex subunit Asterix (WDR83OS).